The sequence spans 416 residues: Heat shock protein DDB_G0280215 (416 aa).

The 114-residue stretch at 37–150 folds into the sHSP domain; it reads SMDWGWKPRM…SQHISLFGRE (114 aa). The tract at residues 216 to 235 is disordered; that stretch reads ETKERERRIRDTKGETEKKK.

Belongs to the small heat shock protein (HSP20) family.

This Dictyostelium discoideum (Social amoeba) protein is Heat shock protein DDB_G0280215.